Here is a 141-residue protein sequence, read N- to C-terminus: Transmembrane protein 216 (141 aa).

The next 4 membrane-spanning stretches (helical) occupy residues 15–35 (ILFF…LLIF), 49–69 (LVLD…RLFF), 82–102 (LGIS…YLLL), and 115–135 (SILL…LATF).

As to quaternary structure, part of the tectonic-like complex (also named B9 complex). Interacts with TMEM107.

The protein resides in the membrane. It localises to the cytoplasm. Its subcellular location is the cytoskeleton. The protein localises to the cilium basal body. Part of the tectonic-like complex which is required for tissue-specific ciliogenesis and may regulate ciliary membrane composition. This is Transmembrane protein 216 (Tmem216) from Rattus norvegicus (Rat).